Consider the following 72-residue polypeptide: Translation initiation factor IF-1 (72 aa).

In terms of domain architecture, S1-like spans 1–72 (MAKDNVIEIE…SKGRITYRFK (72 aa)).

It belongs to the IF-1 family. Component of the 30S ribosomal translation pre-initiation complex which assembles on the 30S ribosome in the order IF-2 and IF-3, IF-1 and N-formylmethionyl-tRNA(fMet); mRNA recruitment can occur at any time during PIC assembly.

Its subcellular location is the cytoplasm. Its function is as follows. One of the essential components for the initiation of protein synthesis. Stabilizes the binding of IF-2 and IF-3 on the 30S subunit to which N-formylmethionyl-tRNA(fMet) subsequently binds. Helps modulate mRNA selection, yielding the 30S pre-initiation complex (PIC). Upon addition of the 50S ribosomal subunit IF-1, IF-2 and IF-3 are released leaving the mature 70S translation initiation complex. The polypeptide is Translation initiation factor IF-1 (Pediococcus pentosaceus (strain ATCC 25745 / CCUG 21536 / LMG 10740 / 183-1w)).